Consider the following 1935-residue polypeptide: Rho GTPase-activating protein 21 (1935 aa).

The tract at residues 1–46 (MATRRATVPEQQQQQPSSPGSEISKNKDGQEQSEMVSPTEEEGFCW) is disordered. A PDZ domain is found at 78–163 (HTTVKDEENG…TLELSVMPKD (86 aa)). Disordered stretches follow at residues 212–237 (VEVP…TTQP), 339–373 (PPSY…PGSH), 413–456 (QNTT…QERL), 673–718 (TSTS…DSNS), and 862–919 (NSKT…DVFS). Polar residues-rich tracts occupy residues 217 to 237 (SGTS…TTQP), 348 to 373 (SMFS…PGSH), and 413 to 429 (QNTT…SSGQ). Composition is skewed to low complexity over residues 441-451 (PQSVQMRQRSV) and 673-685 (TSTS…PAHT). Residues 708-718 (SPEANAGDSNS) show a composition bias toward polar residues. The segment covering 863–884 (SKTERSKSCDEGLDDYKDEGKL) has biased composition (basic and acidic residues). Residues 920 to 1033 (DSNKEGFLYF…WIKAIQENGN (114 aa)) form the PH domain. Positions 1056-1126 (TMMSSSSNKS…KGSWRRIMKK (71 aa)) are disordered. The segment covering 1059-1072 (SSSSNKSEQSPKPS) has biased composition (low complexity). The segment covering 1097-1119 (PKQESERRLFSKDDISPPKDKGS) has biased composition (basic and acidic residues). The Rho-GAP domain maps to 1140-1332 (VRLDDCPPAH…TLIQQHDWFF (193 aa)). Disordered stretches follow at residues 1341-1393 (ITAV…GSGK), 1411-1431 (RKRK…ELDN), 1488-1510 (SEAT…RLPP), 1525-1548 (SMSD…KPKV), 1637-1665 (HRSK…SITP), 1688-1733 (SIRQ…EPEE), and 1838-1925 (SELS…SGTQ). A compositionally biased stretch (polar residues) spans 1345-1355 (QEESTVESQPV). Low complexity predominate over residues 1376–1393 (SDSASDSAKSKGSWGSGK). 2 stretches are compositionally biased toward polar residues: residues 1525-1543 (SMSD…SAQR) and 1646-1662 (RNVQ…TEGS). Positions 1691–1705 (QKTDSECSAESKNEE) are enriched in basic and acidic residues. 2 stretches are compositionally biased toward polar residues: residues 1872–1889 (QVST…SQGT) and 1898–1911 (NGDS…NNFS).

The protein localises to the golgi apparatus membrane. It localises to the cell junction. Its subcellular location is the cytoplasmic vesicle membrane. It is found in the cytoplasm. The protein resides in the cytoskeleton. Its function is as follows. GTPase-activating protein (GAP) for rhoa and cdc42. This Xenopus tropicalis (Western clawed frog) protein is Rho GTPase-activating protein 21 (arhgap21).